Consider the following 602-residue polypeptide: Ligand-dependent nuclear receptor corepressor-like protein (602 aa).

Residues 104 to 124 are disordered; that stretch reads PSLDSSQSTPTEELSSQGQSN. Residues 106 to 124 show a composition bias toward polar residues; that stretch reads LDSSQSTPTEELSSQGQSN. Glycyl lysine isopeptide (Lys-Gly) (interchain with G-Cter in SUMO2) cross-links involve residues K242, K319, K340, and K397. Disordered regions lie at residues 495–521 and 564–602; these read TVDG…KRGR and ERSG…SKPV. Residues 516–568 form the HTH psq-type domain; the sequence is RKKRGRYRQYDHEIMEEAIAMVMSGKMSVSKAQGIYGVPHSTLEYKVKERSGT. A DNA-binding region (H-T-H motif) is located at residues 544–564; the sequence is VSKAQGIYGVPHSTLEYKVKE. The segment covering 585–602 has biased composition (polar residues); sequence YNMTDSGTGSCKNSSKPV.

It is found in the nucleus. May act as transcription activator that binds DNA elements with the sequence 5'-CCCTATCGATCGATCTCTACCT-3'. May play a role in spermatogenesis. The protein is Ligand-dependent nuclear receptor corepressor-like protein (LCORL) of Homo sapiens (Human).